The primary structure comprises 173 residues: ATP synthase subunit b (173 aa).

A helical transmembrane segment spans residues 12-32; that stretch reads LDVNPGLVVWTLVTFLVVVLV.

The protein belongs to the ATPase B chain family. F-type ATPases have 2 components, F(1) - the catalytic core - and F(0) - the membrane proton channel. F(1) has five subunits: alpha(3), beta(3), gamma(1), delta(1), epsilon(1). F(0) has three main subunits: a(1), b(2) and c(10-14). The alpha and beta chains form an alternating ring which encloses part of the gamma chain. F(1) is attached to F(0) by a central stalk formed by the gamma and epsilon chains, while a peripheral stalk is formed by the delta and b chains.

The protein localises to the cell inner membrane. In terms of biological role, f(1)F(0) ATP synthase produces ATP from ADP in the presence of a proton or sodium gradient. F-type ATPases consist of two structural domains, F(1) containing the extramembraneous catalytic core and F(0) containing the membrane proton channel, linked together by a central stalk and a peripheral stalk. During catalysis, ATP synthesis in the catalytic domain of F(1) is coupled via a rotary mechanism of the central stalk subunits to proton translocation. Functionally, component of the F(0) channel, it forms part of the peripheral stalk, linking F(1) to F(0). This chain is ATP synthase subunit b, found in Leptospira interrogans serogroup Icterohaemorrhagiae serovar copenhageni (strain Fiocruz L1-130).